The sequence spans 893 residues: MTKLTVKALSEEIGTPVDRLLQQFSDAGINKKDGDSVTESEKQSLLVHLKKEHGSVDDSASPTRLTLQRKTRSTLSVAGSGGKSKDVQVEVRKKRTYVKASALEEEKKAEQLKAEAEEQAKRDAEEAAVRELEQKAQREAEEQAKREAEAEAKAKREAEEKAKRAEADKAKKEMTKKNEQAKKEAEELKARQELEATRKAEAEAAKLVEEARKLAEENEARWKEEEQKKSAAEKDADYHVTTSSHAREAEDAADRKEEQQPRRRKKKAKPAEAAAPRGGRNQRGGRNKKAQVNKPTSMQHGFDKSATVAKQDVAIGETIVVSELASKMSVKATEVIKVMMKMGAMATINQVIDQETAQLVAEEMGHKVILRKENELEEAVLSDRDNSAEAEGRAPVVTIMGHVDHGKTSTLDYIRRAHVADAEAGGITQHIGAYHVETDNGMITFLDTPGHAAFTAMRARGAQATDIVVLVVAADDGVMPQTIEAIQHAKAAGVPLIVAVNKIDKEDANPDNVKNELAQYDVIPEEWGGENMFVHISAKQGTNIDGLLEAILLQSEVLELTAVREGMASGVVVESRLDKGRGPVATVLVQSGTLNKGDIVLCGQEYGRVRAMRDENGKEIESAGPSIPVEILGLSGVPASGDEATVVRDERKAREVANYRQGKFRDVKLARQQKAKLENMFSNMTAGEVAELNVVLKADVQGSVEAIADSLRKLSTDEVKVNIVGSGVGGITETDAVLAAASNAIILGFNVRADATARRTIENENLDLRYYSIIYQLIDEVKAAMGGMLAPEFKQEIIGLAQVRDVFKSPKLGAIAGCMVTEGTIKRSNPIRVLRDNVVIYEGELESLRRFKDDVAEVKNGYECGIGVKNYNDVRVGDQIEVFEIVEIKRTLD.

2 disordered regions span residues 51–203 (KEHG…AEAE) and 216–299 (EENE…TSMQ). Composition is skewed to basic and acidic residues over residues 102 to 203 (ALEE…AEAE), 216 to 238 (EENE…DADY), and 245 to 261 (HARE…EQQP). One can recognise a tr-type G domain in the interval 392 to 561 (GRAPVVTIMG…LLQSEVLELT (170 aa)). Positions 401–408 (GHVDHGKT) are G1. 401–408 (GHVDHGKT) is a GTP binding site. Positions 426–430 (GITQH) are G2. The interval 447–450 (DTPG) is G3. GTP contacts are provided by residues 447–451 (DTPGH) and 501–504 (NKID). The segment at 501–504 (NKID) is G4. A G5 region spans residues 537–539 (SAK).

Belongs to the TRAFAC class translation factor GTPase superfamily. Classic translation factor GTPase family. IF-2 subfamily.

The protein resides in the cytoplasm. One of the essential components for the initiation of protein synthesis. Protects formylmethionyl-tRNA from spontaneous hydrolysis and promotes its binding to the 30S ribosomal subunits. Also involved in the hydrolysis of GTP during the formation of the 70S ribosomal complex. This chain is Translation initiation factor IF-2, found in Aliivibrio fischeri (strain ATCC 700601 / ES114) (Vibrio fischeri).